A 393-amino-acid polypeptide reads, in one-letter code: Protein TsgA (393 aa).

12 consecutive transmembrane segments (helical) span residues 11–31, 51–71, 78–98, 101–121, 134–154, 162–182, 206–226, 245–265, 273–293, 298–318, 332–352, and 361–381; these read WISF…GMVM, FLNA…EIIP, FGFI…SLAL, AAMF…TFLI, LLFT…VAAF, WYWV…LTFG, IGVL…LGFI, ALVS…SFIL, ILTV…TGTQ, WFIL…ITLG, FILT…GPIV, and LLTA…LGFV.

Belongs to the major facilitator superfamily. TsgA family.

It is found in the cell inner membrane. In Salmonella agona (strain SL483), this protein is Protein TsgA.